Here is a 416-residue protein sequence, read N- to C-terminus: D-amino acid dehydrogenase (416 aa).

3 to 17 (ITILGSGVIGVTTAY) contributes to the FAD binding site.

Belongs to the DadA oxidoreductase family. FAD is required as a cofactor.

It carries out the reaction a D-alpha-amino acid + A + H2O = a 2-oxocarboxylate + AH2 + NH4(+). It functions in the pathway amino-acid degradation; D-alanine degradation; NH(3) and pyruvate from D-alanine: step 1/1. Oxidative deamination of D-amino acids. This chain is D-amino acid dehydrogenase, found in Brucella canis (strain ATCC 23365 / NCTC 10854 / RM-666).